A 302-amino-acid polypeptide reads, in one-letter code: Small ribosomal subunit protein uS3 (302 aa).

Residues 17-86 (IDEFFAEELA…DPQIDVQEVE (70 aa)) form the KH type-2 domain. Residues 222-302 (EDADAEDADA…EMDDEDGGAE (81 aa)) are disordered.

The protein belongs to the universal ribosomal protein uS3 family. Part of the 30S ribosomal subunit.

Its function is as follows. Binds the lower part of the 30S subunit head. This is Small ribosomal subunit protein uS3 from Halobacterium salinarum (strain ATCC 700922 / JCM 11081 / NRC-1) (Halobacterium halobium).